We begin with the raw amino-acid sequence, 58 residues long: Sperm protamine P2 (58 aa).

The segment at Arg-1–Lys-58 is disordered.

As to expression, gonads.

The protein localises to the nucleus. The protein resides in the chromosome. In terms of biological role, protamines substitute for histones in the chromatin of sperm during the haploid phase of spermatogenesis. They compact sperm DNA into a highly condensed, stable and inactive complex. The sequence is that of Sperm protamine P2 from Bolinus brandaris (Purple dye murex).